The sequence spans 133 residues: Acyl-CoA thioesterase YbgC (133 aa).

Residue aspartate 11 is part of the active site.

Belongs to the 4-hydroxybenzoyl-CoA thioesterase family. As to quaternary structure, homotetramer. May interact with CagA.

Thioesterase that may be involved in phospholipid metabolism. Displays acyl-CoA thioesterase activity with lauroyl-CoA (C12:0), myristoyl-CoA (C14:0), palmitoyl-CoA (C16:0), stearoyl-CoA (C18:0) and benzoyl-CoA, catalyzing the hydrolysis of the thioester bond. Has low activity with butyryl-CoA and octanoyl-CoA. The chain is Acyl-CoA thioesterase YbgC (ybgC) from Helicobacter pylori (strain ATCC 700392 / 26695) (Campylobacter pylori).